Consider the following 279-residue polypeptide: Coiled-coil domain-containing protein 117 (279 aa).

The disordered stretch occupies residues 1 to 82 (MAALGRPFSG…REEEEDDDCP (82 aa)). R48 is subject to Omega-N-methylarginine. A Phosphoserine modification is found at S53. The span at 63 to 72 (VSVHCKKKHK) shows a compositional bias: basic residues. Residues 141 to 168 (QCEVARRKLQEIEDRIIDEDEEVEADRN) adopt a coiled-coil conformation. Residues 217-279 (LLSDKPKPSS…ATSTEEEMEL (63 aa)) are disordered. Polar residues-rich tracts occupy residues 224 to 235 (PSSNTKNYTGES) and 262 to 272 (SLYNSLETATS).

Interacts with CIAO2B; the interaction is direct. Interacts with MMS19; the interaction is indirect.

The protein localises to the cytoplasm. It localises to the cytoskeleton. It is found in the spindle. The protein resides in the nucleus. Functionally, facilitates DNA repair, cell cycle progression, and cell proliferation through its interaction with CIAO2B. This Homo sapiens (Human) protein is Coiled-coil domain-containing protein 117.